A 235-amino-acid chain; its full sequence is Phosphoribosylformylglycinamidine synthase subunit PurQ (235 aa).

In terms of domain architecture, Glutamine amidotransferase type-1 spans 3–234; the sequence is FGVLVFPGSN…LNSLMAQGVT (232 aa). Residue cysteine 86 is the Nucleophile of the active site. Catalysis depends on residues histidine 203 and glutamate 205.

Part of the FGAM synthase complex composed of 1 PurL, 1 PurQ and 2 PurS subunits.

The protein localises to the cytoplasm. It carries out the reaction N(2)-formyl-N(1)-(5-phospho-beta-D-ribosyl)glycinamide + L-glutamine + ATP + H2O = 2-formamido-N(1)-(5-O-phospho-beta-D-ribosyl)acetamidine + L-glutamate + ADP + phosphate + H(+). The enzyme catalyses L-glutamine + H2O = L-glutamate + NH4(+). Its pathway is purine metabolism; IMP biosynthesis via de novo pathway; 5-amino-1-(5-phospho-D-ribosyl)imidazole from N(2)-formyl-N(1)-(5-phospho-D-ribosyl)glycinamide: step 1/2. Its function is as follows. Part of the phosphoribosylformylglycinamidine synthase complex involved in the purines biosynthetic pathway. Catalyzes the ATP-dependent conversion of formylglycinamide ribonucleotide (FGAR) and glutamine to yield formylglycinamidine ribonucleotide (FGAM) and glutamate. The FGAM synthase complex is composed of three subunits. PurQ produces an ammonia molecule by converting glutamine to glutamate. PurL transfers the ammonia molecule to FGAR to form FGAM in an ATP-dependent manner. PurS interacts with PurQ and PurL and is thought to assist in the transfer of the ammonia molecule from PurQ to PurL. This Acaryochloris marina (strain MBIC 11017) protein is Phosphoribosylformylglycinamidine synthase subunit PurQ.